Here is a 412-residue protein sequence, read N- to C-terminus: Elongation factor 1-gamma 2 (412 aa).

Position 2 is an N-acetylserine (Ser2). Positions 2–77 constitute a GST N-terminal domain; sequence SQGTLYINRS…YLANQVADEK (76 aa). The region spanning 86-217 is the GST C-terminal domain; the sequence is DVIEKSQILR…AEKALTYTPP (132 aa). Positions 216 to 253 are disordered; the sequence is PPKKQKAEKPKAEKSKAEKKKDEAKPADDAAPAKKPKH. Residues 220–247 show a composition bias toward basic and acidic residues; the sequence is QKAEKPKAEKSKAEKKKDEAKPADDAAP. An EF-1-gamma C-terminal domain is found at 251 to 412; the sequence is PKHPLEALGK…KEIVDGKVLK (162 aa).

The eukaryotic elongation factor 1 complex (eEF1) is probably a heterohexamer. Two trimeric complexes, each composed of eEF1A (TEF1 or TEF2), eEF1Balpha (EFB1) and eEF1Bgamma (CAM1 or TEF4), are probably dimerized via the eF1Bgamma subunits. The eEF1B subcomplex with the GEF activity is formed of eEF1Balpha and eEF1Bgamma. TEF4 interacts with EFB1.

The protein localises to the cytoplasm. Its pathway is protein biosynthesis; polypeptide chain elongation. Its function is as follows. Subunit of the eukaryotic elongation factor 1 complex (eEF1). Probably plays a role in anchoring the complex to other cellular components. The chain is Elongation factor 1-gamma 2 (TEF4) from Saccharomyces cerevisiae (strain ATCC 204508 / S288c) (Baker's yeast).